Here is a 148-residue protein sequence, read N- to C-terminus: Cytochrome c-552 (148 aa).

Positions 1 to 17 (MKRTLMAFLLLGGLALA) are cleaved as a signal peptide. The residue at position 18 (Gln18) is a Pyrrolidone carboxylic acid. Residues Cys28, Cys31, His32, and Met86 each contribute to the heme c site.

Binds 1 heme c group covalently per subunit.

Its function is as follows. This monoheme basic protein appears to function as an electron donor to cytochrome oxidase in T.thermophilus. The polypeptide is Cytochrome c-552 (cycA) (Thermus thermophilus (strain ATCC 27634 / DSM 579 / HB8)).